An 83-amino-acid chain; its full sequence is Large ribosomal subunit protein eL37 (83 aa).

Residues cysteine 19, cysteine 22, cysteine 34, and cysteine 37 each coordinate Zn(2+). The segment at cysteine 19 to cysteine 37 adopts a C4-type zinc-finger fold.

This sequence belongs to the eukaryotic ribosomal protein eL37 family. The cofactor is Zn(2+).

Binds to the 23S rRNA. This is Large ribosomal subunit protein eL37 (RPL37) from Leishmania donovani.